The primary structure comprises 98 residues: Large ribosomal subunit protein uL23 (98 aa).

The protein belongs to the universal ribosomal protein uL23 family. In terms of assembly, part of the 50S ribosomal subunit. Contacts protein L29, and trigger factor when it is bound to the ribosome.

Functionally, one of the early assembly proteins it binds 23S rRNA. One of the proteins that surrounds the polypeptide exit tunnel on the outside of the ribosome. Forms the main docking site for trigger factor binding to the ribosome. The sequence is that of Large ribosomal subunit protein uL23 from Methylobacterium radiotolerans (strain ATCC 27329 / DSM 1819 / JCM 2831 / NBRC 15690 / NCIMB 10815 / 0-1).